We begin with the raw amino-acid sequence, 502 residues long: Probable cytochrome P450 554A1 (502 aa).

Residues Leu-3–Tyr-20 form a helical membrane-spanning segment. Heme is bound at residue Cys-448.

The protein belongs to the cytochrome P450 family. Heme serves as cofactor.

The protein resides in the membrane. The protein is Probable cytochrome P450 554A1 (cyp554A1) of Dictyostelium discoideum (Social amoeba).